A 495-amino-acid chain; its full sequence is Trimethylamine methyltransferase MttB (495 aa).

Residue O334 is a non-standard amino acid, pyrrolysine.

It belongs to the trimethylamine methyltransferase family.

The catalysed reaction is Co(I)-[trimethylamine-specific corrinoid protein] + trimethylamine + H(+) = methyl-Co(III)-[trimethylamine-specific corrinoid protein] + dimethylamine. Its pathway is one-carbon metabolism; methanogenesis from trimethylamine. In terms of biological role, catalyzes the transfer of a methyl group from trimethylamine to the corrinoid cofactor of MttC. The polypeptide is Trimethylamine methyltransferase MttB (mttB) (Methanosarcina barkeri (strain Fusaro / DSM 804)).